The primary structure comprises 360 residues: Phospho-N-acetylmuramoyl-pentapeptide-transferase (360 aa).

The next 10 membrane-spanning stretches (helical) occupy residues 2–22 (IAIL…TPLF), 52–72 (MGGV…NISA), 80–100 (GLLL…DDFI), 114–134 (WKII…LQFP), 156–176 (LAFA…NFLI), 189–209 (LDGL…VVTM), 235–255 (LAIV…WNAS), 259–279 (IFMG…LSIL), 284–304 (FLAV…VIQI), and 338–358 (FWLI…AEWV).

It belongs to the glycosyltransferase 4 family. MraY subfamily. Mg(2+) serves as cofactor.

The protein resides in the cell membrane. The catalysed reaction is UDP-N-acetyl-alpha-D-muramoyl-L-alanyl-gamma-D-glutamyl-meso-2,6-diaminopimeloyl-D-alanyl-D-alanine + di-trans,octa-cis-undecaprenyl phosphate = di-trans,octa-cis-undecaprenyl diphospho-N-acetyl-alpha-D-muramoyl-L-alanyl-D-glutamyl-meso-2,6-diaminopimeloyl-D-alanyl-D-alanine + UMP. The protein operates within cell wall biogenesis; peptidoglycan biosynthesis. Its function is as follows. Catalyzes the initial step of the lipid cycle reactions in the biosynthesis of the cell wall peptidoglycan: transfers peptidoglycan precursor phospho-MurNAc-pentapeptide from UDP-MurNAc-pentapeptide onto the lipid carrier undecaprenyl phosphate, yielding undecaprenyl-pyrophosphoryl-MurNAc-pentapeptide, known as lipid I. The sequence is that of Phospho-N-acetylmuramoyl-pentapeptide-transferase from Beutenbergia cavernae (strain ATCC BAA-8 / DSM 12333 / CCUG 43141 / JCM 11478 / NBRC 16432 / NCIMB 13614 / HKI 0122).